Here is a 334-residue protein sequence, read N- to C-terminus: Holliday junction branch migration complex subunit RuvB (334 aa).

The large ATPase domain (RuvB-L) stretch occupies residues 1–182 (MDERLVSSEA…FGVLSRLEYY (182 aa)). Residues leucine 21, arginine 22, glycine 63, lysine 66, threonine 67, threonine 68, 129–131 (EDF), arginine 172, tyrosine 182, and arginine 219 contribute to the ATP site. Mg(2+) is bound at residue threonine 67. Residues 183-253 (TQEELTDIVS…IAHDALERLQ (71 aa)) are small ATPAse domain (RuvB-S). The segment at 256-334 (ALGLDHIDHK…HFRLEAPARD (79 aa)) is head domain (RuvB-H). Positions 311 and 316 each coordinate DNA.

Belongs to the RuvB family. As to quaternary structure, homohexamer. Forms an RuvA(8)-RuvB(12)-Holliday junction (HJ) complex. HJ DNA is sandwiched between 2 RuvA tetramers; dsDNA enters through RuvA and exits via RuvB. An RuvB hexamer assembles on each DNA strand where it exits the tetramer. Each RuvB hexamer is contacted by two RuvA subunits (via domain III) on 2 adjacent RuvB subunits; this complex drives branch migration. In the full resolvosome a probable DNA-RuvA(4)-RuvB(12)-RuvC(2) complex forms which resolves the HJ.

It is found in the cytoplasm. It catalyses the reaction ATP + H2O = ADP + phosphate + H(+). Functionally, the RuvA-RuvB-RuvC complex processes Holliday junction (HJ) DNA during genetic recombination and DNA repair, while the RuvA-RuvB complex plays an important role in the rescue of blocked DNA replication forks via replication fork reversal (RFR). RuvA specifically binds to HJ cruciform DNA, conferring on it an open structure. The RuvB hexamer acts as an ATP-dependent pump, pulling dsDNA into and through the RuvAB complex. RuvB forms 2 homohexamers on either side of HJ DNA bound by 1 or 2 RuvA tetramers; 4 subunits per hexamer contact DNA at a time. Coordinated motions by a converter formed by DNA-disengaged RuvB subunits stimulates ATP hydrolysis and nucleotide exchange. Immobilization of the converter enables RuvB to convert the ATP-contained energy into a lever motion, pulling 2 nucleotides of DNA out of the RuvA tetramer per ATP hydrolyzed, thus driving DNA branch migration. The RuvB motors rotate together with the DNA substrate, which together with the progressing nucleotide cycle form the mechanistic basis for DNA recombination by continuous HJ branch migration. Branch migration allows RuvC to scan DNA until it finds its consensus sequence, where it cleaves and resolves cruciform DNA. This is Holliday junction branch migration complex subunit RuvB from Bacillus velezensis (strain DSM 23117 / BGSC 10A6 / LMG 26770 / FZB42) (Bacillus amyloliquefaciens subsp. plantarum).